The chain runs to 110 residues: Large ribosomal subunit protein uL22 (110 aa).

The protein belongs to the universal ribosomal protein uL22 family. Part of the 50S ribosomal subunit.

Its function is as follows. This protein binds specifically to 23S rRNA; its binding is stimulated by other ribosomal proteins, e.g. L4, L17, and L20. It is important during the early stages of 50S assembly. It makes multiple contacts with different domains of the 23S rRNA in the assembled 50S subunit and ribosome. In terms of biological role, the globular domain of the protein is located near the polypeptide exit tunnel on the outside of the subunit, while an extended beta-hairpin is found that lines the wall of the exit tunnel in the center of the 70S ribosome. This chain is Large ribosomal subunit protein uL22, found in Photorhabdus laumondii subsp. laumondii (strain DSM 15139 / CIP 105565 / TT01) (Photorhabdus luminescens subsp. laumondii).